We begin with the raw amino-acid sequence, 120 residues long: Chaperonin GroEL (120 aa).

23-27 (DGTTT) provides a ligand contact to ATP.

It belongs to the chaperonin (HSP60) family. Forms a cylinder of 14 subunits composed of two heptameric rings stacked back-to-back. Interacts with the co-chaperonin GroES.

It is found in the cytoplasm. It carries out the reaction ATP + H2O + a folded polypeptide = ADP + phosphate + an unfolded polypeptide.. In terms of biological role, together with its co-chaperonin GroES, plays an essential role in assisting protein folding. The GroEL-GroES system forms a nano-cage that allows encapsulation of the non-native substrate proteins and provides a physical environment optimized to promote and accelerate protein folding. This chain is Chaperonin GroEL, found in Mycobacterium kansasii.